The following is a 361-amino-acid chain: Aminomethyltransferase (361 aa).

This sequence belongs to the GcvT family. The glycine cleavage system is composed of four proteins: P, T, L and H.

The catalysed reaction is N(6)-[(R)-S(8)-aminomethyldihydrolipoyl]-L-lysyl-[protein] + (6S)-5,6,7,8-tetrahydrofolate = N(6)-[(R)-dihydrolipoyl]-L-lysyl-[protein] + (6R)-5,10-methylene-5,6,7,8-tetrahydrofolate + NH4(+). Functionally, the glycine cleavage system catalyzes the degradation of glycine. The sequence is that of Aminomethyltransferase from Herpetosiphon aurantiacus (strain ATCC 23779 / DSM 785 / 114-95).